Here is a 431-residue protein sequence, read N- to C-terminus: L-cysteine:1D-myo-inositol 2-amino-2-deoxy-alpha-D-glucopyranoside ligase (431 aa).

C44 is a Zn(2+) binding site. L-cysteinyl-5'-AMP-binding positions include 44 to 47, T59, and 82 to 84; these read CGIT and NVT. The 'HIGH' region signature appears at 46–56; sequence ITPYDATHLGH. The short motif at 187–192 is the 'ERGGDP' region element; the sequence is ERGGDP. L-cysteinyl-5'-AMP is bound at residue W227. C231 is a Zn(2+) binding site. 249–251 contacts L-cysteinyl-5'-AMP; the sequence is GND. A Zn(2+)-binding site is contributed by H256. I283 is an L-cysteinyl-5'-AMP binding site. The 'KMSKS' region motif lies at 289–293; it reads KMSKS.

Belongs to the class-I aminoacyl-tRNA synthetase family. MshC subfamily. In terms of assembly, monomer. Requires Zn(2+) as cofactor.

The catalysed reaction is 1D-myo-inositol 2-amino-2-deoxy-alpha-D-glucopyranoside + L-cysteine + ATP = 1D-myo-inositol 2-(L-cysteinylamino)-2-deoxy-alpha-D-glucopyranoside + AMP + diphosphate + H(+). In terms of biological role, catalyzes the ATP-dependent condensation of GlcN-Ins and L-cysteine to form L-Cys-GlcN-Ins. The sequence is that of L-cysteine:1D-myo-inositol 2-amino-2-deoxy-alpha-D-glucopyranoside ligase from Stackebrandtia nassauensis (strain DSM 44728 / CIP 108903 / NRRL B-16338 / NBRC 102104 / LLR-40K-21).